A 377-amino-acid chain; its full sequence is Putative F-box only protein 10 (377 aa).

The region spanning 1–46 (MVSVNLPWELVEEILYRVPPQSLARFRTVCKQWNSLFDDNKFVNDH) is the F-box domain.

The chain is Putative F-box only protein 10 (FBX10) from Arabidopsis thaliana (Mouse-ear cress).